We begin with the raw amino-acid sequence, 162 residues long: uncharacterized protein (162 aa).

A signal peptide spans 1–24 (MKRGVATLPVILVILLSVAAGAGA).

This is an uncharacterized protein from Mycobacterium bovis (strain ATCC BAA-935 / AF2122/97).